Reading from the N-terminus, the 831-residue chain is MRLKTPMKAIHKNLLLTRTGDVWAYYRIKSNSIPMQNKEKVESYKKKWQHLFEEITSYEDFHLMMYPSEYELEKRFKDLETDIAADAMDVARYYNEETVRLLEQRLGRLTKYDFILGVKLKSSLVNISVELKDNILSFFNTATDTVVKMLGWEQNVSTSFFEKYEEVEETLANIMASVRGERLSETEMTYINRYHFVRGLKHQTNEESEIKDVRSITNTIIDPTDPSVLHLHSDQDEGYSAFVVIDEFLHNMSESDLFYEAQSLPFPVEVQMKIQTESKSITKPALNLKRQQLKEEQKEQQSTGDRSDVSTVTSATMIRHLQDEIKKEDVHVMNWLSVIVVHGKTKKECVGKATIVKRHLKGAGITCRLPVADQLNLFYKMLPGEKLDITDKNWIQKTTQDGVAESLFAVNSDIGSKIGFFLGWVDRFQEHTDLESAIMSSRDFVLFHPFLANQQLKGSKTRSPHCLITGDTGNGKSYLAKLIFNYISMLNIKSLYIDPKKEMRKWIQRVLNDEYIRENFPLYIAHLEKYNYITLDHENTHNWGALDPISFLPPMKAKELVQVIFEQVYDFKGKDDINTAFLRATSEVIDAKQKGEQVGSLDIIRKMQSHPEEAVQKAGDYLNEVVSDSILKLCIHDGSNPALSLEKRITILEVENMDLPDHAERLENYTISQLKSSAVMFALGKFCELFGMNQDEQTVEFIDEAWIFTTSQQGKKVERQMRRIGRSYNNAEYFISQSTKDALKEEDSGNFGVAFAFDEPNEREEVLKWMNMEVTKDNKKMMESMFQGQCLFKDYYGRTSKISIECLFEEWQGALKTVEKKAVAYAEEKYL.

Positions 285 to 311 (ALNLKRQQLKEEQKEQQSTGDRSDVST) are disordered. 470 to 477 (GDTGNGKS) is an ATP binding site.

This is an uncharacterized protein from Bacillus subtilis (strain 168).